A 400-amino-acid polypeptide reads, in one-letter code: MGFVLVPKSDFQIPLEADTIRPDLFEGLDLDEIRSLQVYEGNIKRPLGEFFEIAETSHEDQLIRIDGDVSRVKYIGSGMKSGKIIINGDVGLQLGCEMKGGEIEVNGNVSSWIGMEMHGGTIKINGNAGDYVGCAYRGEWRGMKGGKIIIQGNAGNNIGGGMMAGEIYIGGDAGNFCGIRMNGGEITVRGDAGRAPGAEMVSGIIKIHGRISSLLPGFKEISTFKEDGSLMILFKGDLSEKNPEGNLYINYNKNLHILENETDEGRVITKKGIKVIYNSGSTIREGQIIKGGNKLTDDYIDECARCCISPEDYKLLGEPENVVVSSHGNEVVLRAVEDPGIQMGTIFIPRGIWANVLTPPYTESTGSPMYKGVPVYLRKASQGERILSAEELVEEYGVGK.

Repeat copies occupy residues 76–88 (GSGMKSGKIIING), 95–107 (GCEMKGGEIEVNG), 114–126 (GMEMHGGTIKING), 140–152 (WRGMKGGKIIIQG), 159–171 (GGGMMAGEIYIGG), 178–190 (GIRMNGGEITVRG), and 197–209 (GAEMVSGIIKIHG). The interval 76-209 (GSGMKSGKII…MVSGIIKIHG (134 aa)) is 7 X 13 AA repeats of [GW]-X-X-M-X-X-G-X-I-X-[IV]-X-G.

It in the N-terminal section; belongs to the FwdC/FmdC family. In the C-terminal section; belongs to the molybdenum dinucleotide binding protein family. As to quaternary structure, consists of five subunits; FmdA, FmdB, FmdC, FmdD, and FmdE.

The enzyme catalyses N-formylmethanofuran + 2 oxidized [2Fe-2S]-[ferredoxin] + H2O = methanofuran + 2 reduced [2Fe-2S]-[ferredoxin] + CO2 + H(+). It participates in one-carbon metabolism; methanogenesis from CO(2); 5,10-methenyl-5,6,7,8-tetrahydromethanopterin from CO(2): step 1/3. Its activity is regulated as follows. Inactivated by cyanide. Its function is as follows. Catalyzes the reversible oxidation of CO(2) and methanofuran (MFR) to N-formylmethanofuran (CHO-MFR). Can only oxidize formylmethanofuran. This enzyme is oxygen-labile. The protein is Molybdenum-containing formylmethanofuran dehydrogenase 1 subunit C (fmdC) of Methanothermobacter marburgensis (strain ATCC BAA-927 / DSM 2133 / JCM 14651 / NBRC 100331 / OCM 82 / Marburg) (Methanobacterium thermoautotrophicum).